The following is a 187-amino-acid chain: Large ribosomal subunit protein uL22 (187 aa).

A disordered region spans residues 155–187 (DAVSRAAPTDDAPAKKKLSKKKLARQKEKMMRE). The segment covering 169–178 (KKKLSKKKLA) has biased composition (basic residues).

It belongs to the universal ribosomal protein uL22 family.

The protein is Large ribosomal subunit protein uL22 (RpL17) of Lonomia obliqua (Moth).